The chain runs to 456 residues: Adenylosuccinate lyase (456 aa).

Residues Arg15–Tyr16, Asn90–Asp92, and Thr122–Ser123 each bind N(6)-(1,2-dicarboxyethyl)-AMP. The active-site Proton donor/acceptor is the His171. N(6)-(1,2-dicarboxyethyl)-AMP is bound at residue Gln247. Ser295 serves as the catalytic Proton donor/acceptor. Residues Ser296, Lys301–Asn303, Asn309, Arg335, and Ser340–Arg344 each bind N(6)-(1,2-dicarboxyethyl)-AMP.

Belongs to the lyase 1 family. Adenylosuccinate lyase subfamily. In terms of assembly, homotetramer. Residues from neighboring subunits contribute catalytic and substrate-binding residues to each active site.

The catalysed reaction is N(6)-(1,2-dicarboxyethyl)-AMP = fumarate + AMP. It carries out the reaction (2S)-2-[5-amino-1-(5-phospho-beta-D-ribosyl)imidazole-4-carboxamido]succinate = 5-amino-1-(5-phospho-beta-D-ribosyl)imidazole-4-carboxamide + fumarate. It functions in the pathway purine metabolism; AMP biosynthesis via de novo pathway; AMP from IMP: step 2/2. The protein operates within purine metabolism; IMP biosynthesis via de novo pathway; 5-amino-1-(5-phospho-D-ribosyl)imidazole-4-carboxamide from 5-amino-1-(5-phospho-D-ribosyl)imidazole-4-carboxylate: step 2/2. In terms of biological role, catalyzes two reactions in de novo purine nucleotide biosynthesis. Catalyzes the breakdown of 5-aminoimidazole- (N-succinylocarboxamide) ribotide (SAICAR or 2-[5-amino-1-(5-phospho-beta-D-ribosyl)imidazole-4-carboxamido]succinate) to 5-aminoimidazole-4-carboxamide ribotide (AICAR or 5-amino-1-(5-phospho-beta-D-ribosyl)imidazole-4-carboxamide) and fumarate, and of adenylosuccinate (ADS or N(6)-(1,2-dicarboxyethyl)-AMP) to adenosine monophosphate (AMP) and fumarate. This Buchnera aphidicola subsp. Acyrthosiphon pisum (strain APS) (Acyrthosiphon pisum symbiotic bacterium) protein is Adenylosuccinate lyase (purB).